Consider the following 147-residue polypeptide: MVHWSAEEKQLITSVWSKVNVEECGAEALARLLIVYPWTQRFFASFGNLSSPTAIMGNPRVRAHGKKVLSSFGEAVKNLDNIKNTYAKLSELHCDKLHVDPENFRLLGDILIIVLASHFARDFTPACQFAWQKLVNVVAHALARKYH.

Residues 3-147 form the Globin domain; the sequence is HWSAEEKQLI…VAHALARKYH (145 aa). Heme b-binding residues include His-64 and His-93.

The protein belongs to the globin family. Heterotetramer of two epsilon chains and two alpha chains. Hemoglobin E (Hbe) contains a alpha-A chains while hemoglobin M (Hbm) contains alpha-D chains.

Functionally, beta-type chain found in early embryos. The sequence is that of Hemoglobin subunit epsilon (HBE) from Gallus gallus (Chicken).